A 137-amino-acid polypeptide reads, in one-letter code: TSC22 domain family protein 3 (137 aa).

The segment at 1–60 is AP1-binding; the sequence is MNTEMYQTPMEVAVYQLHNFSISFFSSLLGGDVVSVKLDNSASGASVVALDNKIEQAMDL. Residues asparagine 40 and valine 73 each carry the phosphoserine modification. Positions 76–97 are leucine-zipper; that stretch reads LKEQIRELLEKNSQLERENTLL. Residues 101 to 137 are disordered; it reads ASPEQLEKFQSRLSPEEPAPEAPETPETPEAPGGSAV. Phosphoserine is present on serine 102. Phosphothreonine occurs at positions 125 and 128. The segment covering 128 to 137 has biased composition (low complexity); it reads TPEAPGGSAV.

The protein belongs to the TSC-22/Dip/Bun family. Can form homodimers, however it is likely to function as a monomer. Interacts with NFKB1. Interacts (via N-terminus) with JUN and FOS; these interactions inhibit the binding of active AP1 to its target DNA. In terms of assembly, interacts with MYOD1. Interacts with HDAC1; this interaction affects HDAC1 activity on MYOG promoter and thus inhibits MYOD1 transcriptional activity. As to quaternary structure, interacts with MYOD1. In terms of tissue distribution, expressed in T-cells. Expression inversely correlates with T-cell activation, being higher in resting cells and lower in cells activated by TCR/CD3 triggering (at protein level). Constitutively expressed in lung, intestine, kidney and liver, most probably by resident cells from the macrophage lineage. Expressed in thymus, lymph nodes, bone marrow, spleen, lung and skeletal muscle. Expressed in spleen and skeletal muscle (at protein level). Expressed in the cortex, medulla and papilla of the kidney. As to expression, expressed in the cortex, medulla and papilla of the kidney. In terms of tissue distribution, expressed in spleen and skeletal muscle (at protein level).

The protein localises to the cytoplasm. It localises to the nucleus. Protects T-cells from IL2 deprivation-induced apoptosis through the inhibition of FOXO3A transcriptional activity that leads to the down-regulation of the pro-apoptotic factor BCL2L11. In macrophages, plays a role in the anti-inflammatory and immunosuppressive effects of glucocorticoids and IL10. In T-cells, inhibits anti-CD3-induced NFKB1 nuclear translocation and thereby NFKB1 DNA-binding activities. In vitro, suppresses AP-1 transcription factor complex DNA-binding activities. Its function is as follows. Inhibits myogenic differentiation and mediates anti-myogenic effects of glucocorticoids by binding and regulating MYOD1 and HDAC1 transcriptional activity resulting in reduced expression of MYOG. The protein is TSC22 domain family protein 3 of Mus musculus (Mouse).